The primary structure comprises 100 residues: Urease subunit gamma (100 aa).

Belongs to the urease gamma subunit family. Heterotrimer of UreA (gamma), UreB (beta) and UreC (alpha) subunits. Three heterotrimers associate to form the active enzyme.

It is found in the cytoplasm. It catalyses the reaction urea + 2 H2O + H(+) = hydrogencarbonate + 2 NH4(+). The protein operates within nitrogen metabolism; urea degradation; CO(2) and NH(3) from urea (urease route): step 1/1. This Sinorhizobium fredii (strain NBRC 101917 / NGR234) protein is Urease subunit gamma.